Consider the following 808-residue polypeptide: Envelope glycoprotein B (808 aa).

Residues 1 to 19 (MVPNKHLLLIILSFSTACG) form the signal peptide. The Virion surface portion of the chain corresponds to 20 to 701 (QTTPTTAVEK…TGILNFIKNP (682 aa)). An N-linked (GlcNAc...) asparagine; by host glycan is attached at Asn-30. 5 disulfide bridges follow: Cys-45/Cys-498, Cys-62/Cys-454, Cys-136/Cys-201, Cys-291/Cys-338, and Cys-520/Cys-557. The interval 101-107 (IFNGWTR) is involved in fusion and/or binding to host membrane. N-linked (GlcNAc...) asparagine; by host glycosylation is present at Asn-158. The segment at 187 to 195 (GWLWGTYRT) is involved in fusion and/or binding to host membrane. N-linked (GlcNAc...) asparagine; by host glycans are attached at residues Asn-239, Asn-251, Asn-285, Asn-331, Asn-344, Asn-355, Asn-361, Asn-532, Asn-569, Asn-587, and Asn-598. Hydrophobic membrane proximal region stretches follow at residues 647-699 (FDNS…NFIK) and 658-698 (IIQD…LNFI). The chain crosses the membrane as a helical span at residues 702-722 (LGGMFTFLLIGAVIILVILLV). Residues 723-808 (RRTNNMSQAP…KQISTEDKIV (86 aa)) are Intravirion-facing.

It belongs to the herpesviridae glycoprotein B family. As to quaternary structure, homotrimer; disulfide-linked. Binds to heparan sulfate proteoglycans. Interacts with gH/gL heterodimer. In terms of processing, a proteolytic cleavage by host furin generates two subunits that remain linked by disulfide bonds.

The protein resides in the virion membrane. Its subcellular location is the host cell membrane. The protein localises to the host endosome membrane. It is found in the host Golgi apparatus membrane. Envelope glycoprotein that forms spikes at the surface of virion envelope. Essential for the initial attachment to heparan sulfate moieties of the host cell surface proteoglycans. Involved in fusion of viral and cellular membranes leading to virus entry into the host cell. Following initial binding to its host receptors, membrane fusion is mediated by the fusion machinery composed at least of gB and the heterodimer gH/gL. May be involved in the fusion between the virion envelope and the outer nuclear membrane during virion egress. This chain is Envelope glycoprotein B, found in Saimiriine herpesvirus 2 (strain 11) (SaHV-2).